Consider the following 400-residue polypeptide: Queuine tRNA-ribosyltransferase (400 aa).

Asp-93 (proton acceptor) is an active-site residue. Substrate-binding positions include 93–97 (DSGGF), Asp-166, and Gly-247. The RNA binding stretch occupies residues 277-283 (GIGDVDD). The active-site Nucleophile is the Asp-296. The tract at residues 301 to 305 (TRLGR) is RNA binding; important for wobble base 34 recognition. 4 residues coordinate Zn(2+): Cys-338, Cys-340, Cys-343, and His-369.

The protein belongs to the queuine tRNA-ribosyltransferase family. In terms of assembly, homodimer. Within each dimer, one monomer is responsible for RNA recognition and catalysis, while the other monomer binds to the replacement base PreQ1. Zn(2+) serves as cofactor.

The catalysed reaction is 7-aminomethyl-7-carbaguanine + guanosine(34) in tRNA = 7-aminomethyl-7-carbaguanosine(34) in tRNA + guanine. It functions in the pathway tRNA modification; tRNA-queuosine biosynthesis. Its function is as follows. Catalyzes the base-exchange of a guanine (G) residue with the queuine precursor 7-aminomethyl-7-deazaguanine (PreQ1) at position 34 (anticodon wobble position) in tRNAs with GU(N) anticodons (tRNA-Asp, -Asn, -His and -Tyr). Catalysis occurs through a double-displacement mechanism. The nucleophile active site attacks the C1' of nucleotide 34 to detach the guanine base from the RNA, forming a covalent enzyme-RNA intermediate. The proton acceptor active site deprotonates the incoming PreQ1, allowing a nucleophilic attack on the C1' of the ribose to form the product. After dissociation, two additional enzymatic reactions on the tRNA convert PreQ1 to queuine (Q), resulting in the hypermodified nucleoside queuosine (7-(((4,5-cis-dihydroxy-2-cyclopenten-1-yl)amino)methyl)-7-deazaguanosine). In Roseiflexus sp. (strain RS-1), this protein is Queuine tRNA-ribosyltransferase.